A 287-amino-acid polypeptide reads, in one-letter code: ATP synthase gamma chain (287 aa).

It belongs to the ATPase gamma chain family. F-type ATPases have 2 components, CF(1) - the catalytic core - and CF(0) - the membrane proton channel. CF(1) has five subunits: alpha(3), beta(3), gamma(1), delta(1), epsilon(1). CF(0) has three main subunits: a, b and c.

It localises to the cell inner membrane. Its function is as follows. Produces ATP from ADP in the presence of a proton gradient across the membrane. The gamma chain is believed to be important in regulating ATPase activity and the flow of protons through the CF(0) complex. The protein is ATP synthase gamma chain of Salmonella agona (strain SL483).